The primary structure comprises 355 residues: Dihydroorotate dehydrogenase (quinone) (355 aa).

Residues 68-72 and threonine 92 each bind FMN; that span reads AGFDK. Lysine 72 provides a ligand contact to substrate. Residue 117 to 121 coordinates substrate; sequence NRMGF. FMN is bound by residues asparagine 154 and asparagine 190. Substrate is bound at residue asparagine 190. Serine 193 serves as the catalytic Nucleophile. Asparagine 195 provides a ligand contact to substrate. 2 residues coordinate FMN: lysine 232 and threonine 260. Residue 261–262 coordinates substrate; that stretch reads NT. FMN-binding positions include glycine 286, glycine 315, and 336–337; that span reads YS.

The protein belongs to the dihydroorotate dehydrogenase family. Type 2 subfamily. Monomer. Requires FMN as cofactor.

The protein localises to the cell membrane. It catalyses the reaction (S)-dihydroorotate + a quinone = orotate + a quinol. It functions in the pathway pyrimidine metabolism; UMP biosynthesis via de novo pathway; orotate from (S)-dihydroorotate (quinone route): step 1/1. Functionally, catalyzes the conversion of dihydroorotate to orotate with quinone as electron acceptor. This chain is Dihydroorotate dehydrogenase (quinone), found in Nocardioides sp. (strain ATCC BAA-499 / JS614).